The chain runs to 626 residues: Basic helix-loop-helix ARNT-like protein 1 (626 aa).

The tract at residues 1 to 60 is disordered; that stretch reads MADQRMDISSTISDFMSPGPTDLLSSSLGTSGVDCNRKRKGSSTDYQESMDTDKDDPHGR. Position 17 is a phosphoserine; by GSK3-beta (Ser17). The span at 17-32 shows a compositional bias: low complexity; that stretch reads SPGPTDLLSSSLGTSG. Phosphothreonine; by GSK3-beta is present on Thr21. Residues 36–41 carry the Nuclear localization signal motif; that stretch reads NRKRKG. Over residues 51-60 the composition is skewed to basic and acidic residues; the sequence is DTDKDDPHGR. In terms of domain architecture, bHLH spans 72 to 125; sequence NAREAHSQIEKRRRDKMNSFIDELASLVPTCNAMSRKLDKLTVLRMAVQHMKTL. Residue Ser78 is modified to Phosphoserine. At Ser90 the chain carries Phosphoserine; by CK2. The Nuclear export signal 1 signature appears at 142 to 152; it reads LSDDELKHLIL. The 73-residue stretch at 143-215 folds into the PAS 1 domain; it reads SDDELKHLIL…EQLSSSDTAP (73 aa). Lys252 participates in a covalent cross-link: Glycyl lysine isopeptide (Lys-Gly) (interchain with G-Cter in SUMO2 and SUMO3). A Glycyl lysine isopeptide (Lys-Gly) (interchain with G-Cter in SUMO2) cross-link involves residue Lys259. The 71-residue stretch at 326-396 folds into the PAS 2 domain; the sequence is PQPVNGEIRV…ECHRQVLQTR (71 aa). Positions 361–369 match the Nuclear export signal 2 motif; it reads LAYLPQELL. In terms of domain architecture, PAC spans 401 to 444; that stretch reads TNCYKFKIKDGSFITLRSRWFSFMNPWTKEVEYIVSTNTVVLAN. Disordered regions lie at residues 458 to 493 and 511 to 595; these read ASPH…AGAG and GSSP…SPSN. Residues 484–493 show a composition bias toward gly residues; sequence IPGGTRAGAG. The interaction with CIART stretch occupies residues 508–588; the sequence is RIRGSSPSSC…IGIDMIDNDQ (81 aa). Residues 511–521 show a composition bias toward low complexity; it reads GSSPSSCGSSP. An N6-acetyllysine modification is found at Lys538.

Component of the circadian clock oscillator which includes the CRY1/2 proteins, CLOCK or NPAS2,BMAL1 or BMAL2, CSNK1D and/or CSNK1E, TIMELESS and the PER1/2/3 proteins. Forms a heterodimer with CLOCK. The CLOCK-BMAL1 heterodimer is required for E-box-dependent transactivation, for CLOCK nuclear translocation and degradation, and, for phosphorylation of both CLOCK and BMAL1. Part of a nuclear complex which also includes RACK1 and PRKCA; RACK1 and PRKCA are recruited to the complex in a circadian manner. Interacts with NPAS2. Interacts with EZH2. Interacts with SUMO3. Interacts with SIRT1. Interacts with AHR. Interacts with ID1, ID2 and ID3. Interacts with DDX4. Interacts with OGT. Interacts with EED and SUZ12. Interacts with MTA1. Interacts with CIART. Interacts with HSP90. Interacts with KAT2B and EP300. Interacts with BHLHE40/DEC1 and BHLHE41/DEC2. Interacts with RELB and the interaction is enhanced in the presence of CLOCK. Interacts with PER1, PER2, CRY1 and CRY2 and this interaction requires a translocation to the nucleus. Interaction of the CLOCK-BMAL1 heterodimer with PER or CRY inhibits transcription activation. Interaction of the CLOCK-BMAL1 with CRY1 is independent of DNA but with PER2 is off DNA. The CLOCK-BMAL1 heterodimer interacts with GSK3B. Interacts with KDM5A. Interacts with KMT2A; in a circadian manner. Interacts with UBE3A. Interacts with PRKCG. Interacts with MAGEL2. Interacts with NCOA2. Interacts with THRAP3. The CLOCK-BMAL1 heterodimer interacts with PASD1. Interacts with PASD1. Interacts with USP9X. Interacts with PIWIL2 (via PIWI domain). Interacts with HDAC3. Interacts with HNF4A. Ubiquitinated, leading to its proteasomal degradation. Deubiquitinated by USP9X. In terms of processing, O-glycosylated; contains O-GlcNAc. O-glycosylation by OGT prevents protein degradation by inhibiting ubiquitination. It also stabilizes the CLOCK-BMAL1 heterodimer thereby increasing CLOCK-BMAL1-mediated transcription of genes in the negative loop of the circadian clock such as PER1/2/3 and CRY1/2. Post-translationally, acetylated on Lys-538 by CLOCK during the repression phase of the circadian cycle. Acetylation facilitates recruitment of CRY1 protein and initiates the repression phase of the circadian cycle. Acetylated at Lys-538 by KAT5 during the activation phase of the cycle, leading to recruitment of the positive transcription elongation factor b (P-TEFb) and BRD4, followed by productive elongation of circadian transcripts. Deacetylated by SIRT1, which may result in decreased protein stability. Phosphorylated upon dimerization with CLOCK. Phosphorylation enhances the transcriptional activity, alters the subcellular localization and decreases the stability of the CLOCK-BMAL1 heterodimer by promoting its degradation. Phosphorylation shows circadian variations in the liver with a peak between CT10 to CT14. Phosphorylation at Ser-90 by CK2 is essential for its nuclear localization, its interaction with CLOCK and controls CLOCK nuclear entry. Dephosphorylation at Ser-78 is important for dimerization with CLOCK and transcriptional activity. In terms of processing, sumoylated on Lys-259 upon dimerization with CLOCK. Predominantly conjugated to poly-SUMO2/3 rather than SUMO1 and the level of these conjugates undergo rhythmic variation, peaking at CT9-CT12. Sumoylation localizes it exclusively to the PML body and promotes its ubiquitination in the PML body, ubiquitin-dependent proteasomal degradation and the transcriptional activity of the CLOCK-BMAL1 heterodimer. Post-translationally, undergoes lysosome-mediated degradation in a time-dependent manner in the liver. As to expression, hair follicles (at protein level). Highly expressed in the adult brain, skeletal muscle and heart.

It localises to the nucleus. It is found in the cytoplasm. The protein localises to the PML body. With respect to regulation, there is conflicting data about the effect of NAD cofactors on activity. PubMed:11441146 suggests that the redox state of the cell can modulate the transcriptional activity of the CLOCK-BMAL1 heterodimer; NADH and NADPH enhance the DNA-binding activity of the heterodimer. PubMed:23229515 reports that NADH and NADPH have no significant effect on DNA-binding activity of the CLOCK-BMAL1 heterodimer. Its function is as follows. Transcriptional activator which forms a core component of the circadian clock. The circadian clock, an internal time-keeping system, regulates various physiological processes through the generation of approximately 24 hour circadian rhythms in gene expression, which are translated into rhythms in metabolism and behavior. It is derived from the Latin roots 'circa' (about) and 'diem' (day) and acts as an important regulator of a wide array of physiological functions including metabolism, sleep, body temperature, blood pressure, endocrine, immune, cardiovascular, and renal function. Consists of two major components: the central clock, residing in the suprachiasmatic nucleus (SCN) of the brain, and the peripheral clocks that are present in nearly every tissue and organ system. Both the central and peripheral clocks can be reset by environmental cues, also known as Zeitgebers (German for 'timegivers'). The predominant Zeitgeber for the central clock is light, which is sensed by retina and signals directly to the SCN. The central clock entrains the peripheral clocks through neuronal and hormonal signals, body temperature and feeding-related cues, aligning all clocks with the external light/dark cycle. Circadian rhythms allow an organism to achieve temporal homeostasis with its environment at the molecular level by regulating gene expression to create a peak of protein expression once every 24 hours to control when a particular physiological process is most active with respect to the solar day. Transcription and translation of core clock components (CLOCK, NPAS2, BMAL1, BMAL2, PER1, PER2, PER3, CRY1 and CRY2) plays a critical role in rhythm generation, whereas delays imposed by post-translational modifications (PTMs) are important for determining the period (tau) of the rhythms (tau refers to the period of a rhythm and is the length, in time, of one complete cycle). A diurnal rhythm is synchronized with the day/night cycle, while the ultradian and infradian rhythms have a period shorter and longer than 24 hours, respectively. Disruptions in the circadian rhythms contribute to the pathology of cardiovascular diseases, cancer, metabolic syndromes and aging. A transcription/translation feedback loop (TTFL) forms the core of the molecular circadian clock mechanism. Transcription factors, CLOCK or NPAS2 and BMAL1 or BMAL2, form the positive limb of the feedback loop, act in the form of a heterodimer and activate the transcription of core clock genes and clock-controlled genes (involved in key metabolic processes), harboring E-box elements (5'-CACGTG-3') within their promoters. The core clock genes: PER1/2/3 and CRY1/2 which are transcriptional repressors form the negative limb of the feedback loop and interact with the CLOCK|NPAS2-BMAL1|BMAL2 heterodimer inhibiting its activity and thereby negatively regulating their own expression. This heterodimer also activates nuclear receptors NR1D1/2 and RORA/B/G, which form a second feedback loop and which activate and repress BMAL1 transcription, respectively. BMAL1 positively regulates myogenesis and negatively regulates adipogenesis via the transcriptional control of the genes of the canonical Wnt signaling pathway. Plays a role in normal pancreatic beta-cell function; regulates glucose-stimulated insulin secretion via the regulation of antioxidant genes NFE2L2/NRF2 and its targets SESN2, PRDX3, CCLC and CCLM. Negatively regulates the mTORC1 signaling pathway; regulates the expression of MTOR and DEPTOR. Controls diurnal oscillations of Ly6C inflammatory monocytes; rhythmic recruitment of the PRC2 complex imparts diurnal variation to chemokine expression that is necessary to sustain Ly6C monocyte rhythms. Regulates the expression of HSD3B2, STAR, PTGS2, CYP11A1, CYP19A1 and LHCGR in the ovary and also the genes involved in hair growth. Plays an important role in adult hippocampal neurogenesis by regulating the timely entry of neural stem/progenitor cells (NSPCs) into the cell cycle and the number of cell divisions that take place prior to cell-cycle exit. Regulates the circadian expression of CIART and KLF11. The CLOCK-BMAL1 heterodimer regulates the circadian expression of SERPINE1/PAI1, VWF, B3, CCRN4L/NOC, NAMPT, DBP, MYOD1, PPARGC1A, PPARGC1B, SIRT1, GYS2, F7, NGFR, GNRHR, BHLHE40/DEC1, ATF4, MTA1, KLF10 and also genes implicated in glucose and lipid metabolism. Promotes rhythmic chromatin opening, regulating the DNA accessibility of other transcription factors. The NPAS2-BMAL1 heterodimer positively regulates the expression of MAOA, F7 and LDHA and modulates the circadian rhythm of daytime contrast sensitivity by regulating the rhythmic expression of adenylate cyclase type 1 (ADCY1) in the retina. The preferred binding motif for the CLOCK-BMAL1 heterodimer is 5'-CACGTGA-3', which contains a flanking adenine nucleotide at the 3-prime end of the canonical 6-nucleotide E-box sequence. CLOCK specifically binds to the half-site 5'-CAC-3', while BMAL1 binds to the half-site 5'-GTGA-3'. The CLOCK-BMAL1 heterodimer also recognizes the non-canonical E-box motifs 5'-AACGTGA-3' and 5'-CATGTGA-3'. Essential for the rhythmic interaction of CLOCK with ASS1 and plays a critical role in positively regulating CLOCK-mediated acetylation of ASS1. Plays a role in protecting against lethal sepsis by limiting the expression of immune checkpoint protein CD274 in macrophages in a PKM2-dependent manner. Regulates the diurnal rhythms of skeletal muscle metabolism via transcriptional activation of genes promoting triglyceride synthesis (DGAT2) and metabolic efficiency (COQ10B). (Microbial infection) Regulates SARS coronavirus-2/SARS-CoV-2 entry and replication in lung epithelial cells probably through the post-transcriptional regulation of ACE2 and interferon-stimulated gene expression. This Homo sapiens (Human) protein is Basic helix-loop-helix ARNT-like protein 1.